We begin with the raw amino-acid sequence, 82 residues long: Probable glutamyl-tRNA(Gln) amidotransferase subunit C (82 aa).

It belongs to the GatC family. Heterotrimer of A, B and C subunits.

The catalysed reaction is L-glutamyl-tRNA(Gln) + L-glutamine + ATP + H2O = L-glutaminyl-tRNA(Gln) + L-glutamate + ADP + phosphate + H(+). It catalyses the reaction L-aspartyl-tRNA(Asn) + L-glutamine + ATP + H2O = L-asparaginyl-tRNA(Asn) + L-glutamate + ADP + phosphate + 2 H(+). Allows the formation of correctly charged Asn-tRNA(Asn) or Gln-tRNA(Gln) through the transamidation of misacylated Asp-tRNA(Asn) or Glu-tRNA(Gln) in organisms which lack either or both of asparaginyl-tRNA or glutaminyl-tRNA synthetases. The reaction takes place in the presence of glutamine and ATP through an activated phospho-Asp-tRNA(Asn) or phospho-Glu-tRNA(Gln). In Methanocaldococcus jannaschii (strain ATCC 43067 / DSM 2661 / JAL-1 / JCM 10045 / NBRC 100440) (Methanococcus jannaschii), this protein is Probable glutamyl-tRNA(Gln) amidotransferase subunit C.